The primary structure comprises 550 residues: CTP synthase (550 aa).

An amidoligase domain region spans residues 1–270; the sequence is MTKFVFVTGG…DRLICEELRL (270 aa). Residue Ser-13 participates in CTP binding. Ser-13 contributes to the UTP binding site. ATP is bound by residues 14–19 and Asp-71; that span reads SLGKGI. Asp-71 and Glu-144 together coordinate Mg(2+). CTP is bound by residues 151-153, 191-196, and Lys-227; these read DIE and KTKPTQ. UTP is bound by residues 191 to 196 and Lys-227; that span reads KTKPTQ. Residues 295–547 form the Glutamine amidotransferase type-1 domain; that stretch reads TIGMVGKYVD…VEAALAGQQR (253 aa). Gly-356 lines the L-glutamine pocket. Cys-383 (nucleophile; for glutamine hydrolysis) is an active-site residue. Residues 384–387, Glu-407, and Arg-473 contribute to the L-glutamine site; that span reads LGMQ. Catalysis depends on residues His-520 and Glu-522.

It belongs to the CTP synthase family. As to quaternary structure, homotetramer.

The enzyme catalyses UTP + L-glutamine + ATP + H2O = CTP + L-glutamate + ADP + phosphate + 2 H(+). The catalysed reaction is L-glutamine + H2O = L-glutamate + NH4(+). It carries out the reaction UTP + NH4(+) + ATP = CTP + ADP + phosphate + 2 H(+). Its pathway is pyrimidine metabolism; CTP biosynthesis via de novo pathway; CTP from UDP: step 2/2. Its activity is regulated as follows. Allosterically activated by GTP, when glutamine is the substrate; GTP has no effect on the reaction when ammonia is the substrate. The allosteric effector GTP functions by stabilizing the protein conformation that binds the tetrahedral intermediate(s) formed during glutamine hydrolysis. Inhibited by the product CTP, via allosteric rather than competitive inhibition. Its function is as follows. Catalyzes the ATP-dependent amination of UTP to CTP with either L-glutamine or ammonia as the source of nitrogen. Regulates intracellular CTP levels through interactions with the four ribonucleotide triphosphates. The protein is CTP synthase of Cupriavidus pinatubonensis (strain JMP 134 / LMG 1197) (Cupriavidus necator (strain JMP 134)).